We begin with the raw amino-acid sequence, 235 residues long: Glycerol-3-phosphate acyltransferase (235 aa).

The next 6 helical transmembrane spans lie at 4-24 (LLAILTVSYIIGSIPTSIMAG), 56-76 (TVTLIDIVKGVVAAVSVVAFF), 94-114 (LLAGMSAVIGHVFTVFAGFKG), 126-146 (IGIAPVSMLMVIGIFLLTVWF), 152-172 (VASIFAAVAFPLIIAIRKYVF), and 194-214 (SLDYHLIIFGLLVAFAILFTH).

This sequence belongs to the PlsY family. In terms of assembly, probably interacts with PlsX.

The protein localises to the cell inner membrane. The enzyme catalyses an acyl phosphate + sn-glycerol 3-phosphate = a 1-acyl-sn-glycero-3-phosphate + phosphate. Its pathway is lipid metabolism; phospholipid metabolism. In terms of biological role, catalyzes the transfer of an acyl group from acyl-phosphate (acyl-PO(4)) to glycerol-3-phosphate (G3P) to form lysophosphatidic acid (LPA). This enzyme utilizes acyl-phosphate as fatty acyl donor, but not acyl-CoA or acyl-ACP. The chain is Glycerol-3-phosphate acyltransferase from Chlorobium phaeovibrioides (strain DSM 265 / 1930) (Prosthecochloris vibrioformis (strain DSM 265)).